We begin with the raw amino-acid sequence, 100 residues long: NADH-quinone oxidoreductase subunit K (100 aa).

3 helical membrane passes run 4–24, 28–48, and 60–80; these read LFHG…SLIV, ILFM…ALVV, and IMYI…LALL.

Belongs to the complex I subunit 4L family. NDH-1 is composed of 13 different subunits. Subunits NuoA, H, J, K, L, M, N constitute the membrane sector of the complex.

It localises to the cell membrane. The catalysed reaction is a quinone + NADH + 5 H(+)(in) = a quinol + NAD(+) + 4 H(+)(out). In terms of biological role, NDH-1 shuttles electrons from NADH, via FMN and iron-sulfur (Fe-S) centers, to quinones in the respiratory chain. The immediate electron acceptor for the enzyme in this species is believed to be ubiquinone. Couples the redox reaction to proton translocation (for every two electrons transferred, four hydrogen ions are translocated across the cytoplasmic membrane), and thus conserves the redox energy in a proton gradient. The sequence is that of NADH-quinone oxidoreductase subunit K from Buchnera aphidicola subsp. Schizaphis graminum (strain Sg).